The chain runs to 284 residues: Tropomyosin (284 aa).

2 disordered regions span residues 1–27 (MDAI…QMEQ) and 99–131 (YERS…KVLE). Residues 1-273 (MDAIKKKMQA…KERYKAISDD (273 aa)) adopt a coiled-coil conformation. Residues 102-131 (SEEKLNSTTEKLEEASKAADESERNRKVLE) show a composition bias toward basic and acidic residues.

It belongs to the tropomyosin family. Homodimer.

Functionally, tropomyosin, in association with the troponin complex, plays a central role in the calcium dependent regulation of muscle contraction. This is Tropomyosin from Mimachlamys nobilis (Noble scallop).